The sequence spans 212 residues: Endonuclease III (212 aa).

The 20-residue stretch at 108–127 (FKELVKLPGVGRKTANVVLN) folds into the HhH domain. Residues C187, C194, C197, and C203 each contribute to the [4Fe-4S] cluster site.

The protein belongs to the Nth/MutY family. [4Fe-4S] cluster is required as a cofactor.

The catalysed reaction is 2'-deoxyribonucleotide-(2'-deoxyribose 5'-phosphate)-2'-deoxyribonucleotide-DNA = a 3'-end 2'-deoxyribonucleotide-(2,3-dehydro-2,3-deoxyribose 5'-phosphate)-DNA + a 5'-end 5'-phospho-2'-deoxyribonucleoside-DNA + H(+). In terms of biological role, DNA repair enzyme that has both DNA N-glycosylase activity and AP-lyase activity. The DNA N-glycosylase activity releases various damaged pyrimidines from DNA by cleaving the N-glycosidic bond, leaving an AP (apurinic/apyrimidinic) site. The AP-lyase activity cleaves the phosphodiester bond 3' to the AP site by a beta-elimination, leaving a 3'-terminal unsaturated sugar and a product with a terminal 5'-phosphate. The protein is Endonuclease III of Rickettsia prowazekii (strain Madrid E).